A 698-amino-acid chain; its full sequence is Serine/threonine-protein kinase Nek8 (698 aa).

Positions 4 to 258 constitute a Protein kinase domain; that stretch reads YERIRVVGRG…LSHIMAQPLC (255 aa). ATP contacts are provided by residues 10 to 18 and K33; that span reads VGRGAFGIV. The active-site Proton acceptor is D128. The residue at position 162 (T162) is a Phosphothreonine; by autocatalysis. The disordered stretch occupies residues 281-307; it reads LTPGTPMAPGSTGSRATSARCRGVPRG. 5 RCC1 repeats span residues 415–466, 467–518, 520–571, 585–636, and 638–689; these read RGII…ALSA, DGEL…ILTS, GRVL…TLLC, SGAC…AIGA, and GEVY…LAVR.

It belongs to the protein kinase superfamily. NEK Ser/Thr protein kinase family. NIMA subfamily. Interacts with PKD2; may regulate PKD2 targeting to the cilium. Interacts with ANKS6. Component of a complex containing at least ANKS6, INVS, NEK8 and NPHP3. ANKS6 may organize complex assembly by linking INVS and NPHP3 to NEK8 and INVS may target it to the proximal ciliary axoneme. Interacts with ANKS3. Mg(2+) serves as cofactor.

Its subcellular location is the cytoplasm. It localises to the cytoskeleton. The protein resides in the cell projection. The protein localises to the cilium. It is found in the cilium axoneme. Its subcellular location is the microtubule organizing center. It localises to the centrosome. It carries out the reaction L-seryl-[protein] + ATP = O-phospho-L-seryl-[protein] + ADP + H(+). It catalyses the reaction L-threonyl-[protein] + ATP = O-phospho-L-threonyl-[protein] + ADP + H(+). Its function is as follows. Required for renal tubular integrity. May regulate local cytoskeletal structure in kidney tubule epithelial cells. May regulate ciliary biogenesis through targeting of proteins to the cilia. Plays a role in organogenesis and is involved in the regulation of the Hippo signaling pathway. In Rattus norvegicus (Rat), this protein is Serine/threonine-protein kinase Nek8 (Nek8).